The following is a 345-amino-acid chain: Phosphoribosylformylglycinamidine cyclo-ligase (345 aa).

This sequence belongs to the AIR synthase family.

It is found in the cytoplasm. It catalyses the reaction 2-formamido-N(1)-(5-O-phospho-beta-D-ribosyl)acetamidine + ATP = 5-amino-1-(5-phospho-beta-D-ribosyl)imidazole + ADP + phosphate + H(+). It functions in the pathway purine metabolism; IMP biosynthesis via de novo pathway; 5-amino-1-(5-phospho-D-ribosyl)imidazole from N(2)-formyl-N(1)-(5-phospho-D-ribosyl)glycinamide: step 2/2. The sequence is that of Phosphoribosylformylglycinamidine cyclo-ligase from Aeromonas hydrophila subsp. hydrophila (strain ATCC 7966 / DSM 30187 / BCRC 13018 / CCUG 14551 / JCM 1027 / KCTC 2358 / NCIMB 9240 / NCTC 8049).